Here is a 1004-residue protein sequence, read N- to C-terminus: MAGKDEAEGLEARLLLLPPEAAAEEPTRCGGGDGGGGGRKRKKTYLDVLGVCCSAEVALVERLLAPLDGVRVVSVVVASRTVVVEHDPAAAPESAIVKALNKAGLEASVRAYGSSGVVSRWPSPYIVASGVLLTASFFEWLFPPLQCLAVAAVVAGAPPMVRRGFAAASRLSLDINVLMLIAVAGALCLGDYTEAGAIVFLFTTAEWLETLACTKASAGMSSLMGMLPVKAVIATTGEVVSVRDVRVGDVVAVRAGEIVPVDGVVVDGQSEVDERSLTGESFPVPKQPHSEVWAGTMNFDGYIAVRTTALAENSTVAKMERLVEAAQNSRSKTQRLIDSCAKYYTPAVVVVAAGVALIPALLGADGLEQWWKLALVMLVSACPCALVLSTPVASFCAMLRAARMGIFIKGGDVLESLGEIRAVAFDKTGTITRGEFSIDSFHLVGDHKVEMDHLLYWIASIESKSSHPMAAALVEYAQSKSIQPNPENVGDFRIYPGEGIYGEIHGKHIYIGNRRTLARASSPQSTQEMGEMIKGVSIGYVICDGELAGVFSLSDDCRTGAAEAIRELGSLGIKSVMLTGDSSAAATHAQGQLGGVMEELHSELLPEDKVRLVSGLKARFGPTMMVGDGMNDAAALAAADVGVSMGISGSAAAMETSHATLMSSDVLRVPEAVRLGRCARRTIAVNVAGSVAVKAAVLALAAAWRPVLWAAVLADVGTCLLVVLNSMTLLREEWKGGAKEDGACRATARSLVMRSQLAADSQAPNAADAGAAGREQTNGCRCCPKPGMSPEHSVVIDIRADGERQEERPAEAAVVAKCCGGGGGEGIRCGASKKPTATVVVAKCCGGGGGGEGTRCGASKNPATAAVVAKCCSGGGGEGIGCGASKKPTATAVVAKCCGGGGEGTRCAASKKPATAAVVAKCCGGDGGEGTGCGASKRSPPAEGSCSGGEGGTNGVGRCCTSVKRPTCCDMGAAEVSDSSPETAKDCRNGRCCAKTMNSGEVKG.

One can recognise an HMA domain in the interval 42–108 (KKTYLDVLGV…ALNKAGLEAS (67 aa)). Helical transmembrane passes span 120–140 (RWPSPYIVASGVLLTASFFEW), 144–164 (PLQCLAVAAVVAGAPPMVRRG), 171–191 (LSLDINVLMLIAVAGALCLGD), 193–213 (TEAGAIVFLFTTAEWLETLAC), 340–360 (CAKYYTPAVVVVAAGVALIPA), 371–391 (WKLALVMLVSACPCALVLSTP), 683–703 (IAVNVAGSVAVKAAVLALAAA), and 707–727 (VLWAAVLADVGTCLLVVLNSM). Residues 931–952 (TGCGASKRSPPAEGSCSGGEGG) form a disordered region.

It belongs to the cation transport ATPase (P-type) (TC 3.A.3) family. Type IB subfamily. In terms of tissue distribution, specifically expressed in roots.

It localises to the vacuole membrane. It catalyses the reaction Zn(2+)(in) + ATP + H2O = Zn(2+)(out) + ADP + phosphate + H(+). The catalysed reaction is Cd(2+)(in) + ATP + H2O = Cd(2+)(out) + ADP + phosphate + H(+). Functionally, root-specific cadmium (Cd) transporter that mediates Cd efflux in root vacuoles. Involved in Cd detoxification by sequestrating Cd into root vacuoles and limiting translocation of Cd from the roots to the shoots, and accumulation in grains. The polypeptide is Cadmium/zinc-transporting ATPase HMA3 (Oryza sativa subsp. japonica (Rice)).